Here is a 156-residue protein sequence, read N- to C-terminus: Small ribosomal subunit protein bS16 (156 aa).

Over residues 124–135 (AAKAAEAETPAE) the composition is skewed to low complexity. Residues 124 to 156 (AAKAAEAETPAEVQHDDEKVELADVEESAPESV) form a disordered region. Positions 136-145 (VQHDDEKVEL) are enriched in basic and acidic residues. Residues 146–156 (ADVEESAPESV) are compositionally biased toward acidic residues.

Belongs to the bacterial ribosomal protein bS16 family.

This chain is Small ribosomal subunit protein bS16, found in Bifidobacterium animalis subsp. lactis (strain AD011).